The primary structure comprises 232 residues: MTNYREIAWQGLWKNNPGLVQLLGLCPLLAVTATITNALGLGVATMLVLIGSNILVSLVRDYVPKEIRIPVFVMIIAALVTTVQLLINAYAYGLYLSLGIFLPLIVTNCIIIGRAEAFASRNNAFSAAFDGLMMGLGFTLVLAVLGATRELLGQGTLFDGADQLLGPWAKSLTIHVWQVDTPFLLAMLPPGAFIVMGLLIALKNVIDKKLKEHQPQVATEPSVTRARITKVS.

The next 6 membrane-spanning stretches (helical) occupy residues Gly-18 to Ala-38, Leu-39 to Val-59, Ile-69 to Ala-89, Gly-93 to Gly-113, Ala-127 to Ala-147, and Pro-182 to Leu-202.

Belongs to the NqrDE/RnfAE family. The complex is composed of six subunits: RnfA, RnfB, RnfC, RnfD, RnfE and RnfG.

It is found in the cell inner membrane. Functionally, part of a membrane-bound complex that couples electron transfer with translocation of ions across the membrane. This Shewanella sp. (strain W3-18-1) protein is Ion-translocating oxidoreductase complex subunit E.